Reading from the N-terminus, the 545-residue chain is ATP synthase subunit alpha (545 aa).

173 to 180 (GDRQTGKT) lines the ATP pocket.

It belongs to the ATPase alpha/beta chains family. In terms of assembly, F-type ATPases have 2 components, CF(1) - the catalytic core - and CF(0) - the membrane proton channel. CF(1) has five subunits: alpha(3), beta(3), gamma(1), delta(1), epsilon(1). CF(0) has three main subunits: a(1), b(2) and c(9-12). The alpha and beta chains form an alternating ring which encloses part of the gamma chain. CF(1) is attached to CF(0) by a central stalk formed by the gamma and epsilon chains, while a peripheral stalk is formed by the delta and b chains.

It localises to the cell membrane. It carries out the reaction ATP + H2O + 4 H(+)(in) = ADP + phosphate + 5 H(+)(out). Its function is as follows. Produces ATP from ADP in the presence of a proton gradient across the membrane. The alpha chain is a regulatory subunit. This Paenarthrobacter aurescens (strain TC1) protein is ATP synthase subunit alpha.